Consider the following 508-residue polypeptide: Glycerol kinase (508 aa).

Position 14 (threonine 14) interacts with ADP. Positions 14, 15, and 16 each coordinate ATP. Threonine 14 lines the sn-glycerol 3-phosphate pocket. Position 18 (arginine 18) interacts with ADP. Sn-glycerol 3-phosphate is bound by residues arginine 84, glutamate 85, and tyrosine 136. Residues arginine 84, glutamate 85, and tyrosine 136 each coordinate glycerol. Phosphohistidine; by HPr is present on histidine 232. Residue aspartate 246 coordinates sn-glycerol 3-phosphate. 2 residues coordinate glycerol: aspartate 246 and glutamine 247. Positions 268 and 311 each coordinate ADP. The ATP site is built by threonine 268, glycine 311, glutamine 315, and glycine 412. ADP-binding residues include glycine 412 and asparagine 416.

This sequence belongs to the FGGY kinase family. As to quaternary structure, homotetramer and homodimer (in equilibrium). In terms of processing, the phosphoenolpyruvate-dependent sugar phosphotransferase system (PTS), including enzyme I, and histidine-containing protein (HPr) are required for the phosphorylation, which leads to the activation of the enzyme.

It catalyses the reaction glycerol + ATP = sn-glycerol 3-phosphate + ADP + H(+). Its pathway is polyol metabolism; glycerol degradation via glycerol kinase pathway; sn-glycerol 3-phosphate from glycerol: step 1/1. Its activity is regulated as follows. Activated by phosphorylation and inhibited by fructose 1,6-bisphosphate (FBP). In terms of biological role, key enzyme in the regulation of glycerol uptake and metabolism. Catalyzes the phosphorylation of glycerol to yield sn-glycerol 3-phosphate. The protein is Glycerol kinase of Streptococcus pyogenes serotype M28 (strain MGAS6180).